The following is a 330-amino-acid chain: 3'-5' exonuclease (330 aa).

The segment at 1–92 (MDQYLIKMST…DGTPSPEKEI (92 aa)) is disordered. Basic and acidic residues-rich tracts occupy residues 27-39 (NTTR…KEKI) and 48-66 (KDTP…ENPP). Ser79 and Ser87 each carry phosphoserine. In terms of domain architecture, 3'-5' exonuclease spans 117–289 (SADEVMQWVE…IGQVIYRDIE (173 aa)). The Mg(2+) site is built by Asp139, Glu141, and Asp277.

It belongs to the WRNexo family.

The protein resides in the nucleus. In terms of biological role, has exonuclease activity on both single-stranded and duplex templates bearing overhangs, but not blunt ended duplex DNA, and cleaves in a 3'-5' direction. Essential for the formation of DNA replication focal centers. Has an important role in maintaining genome stability. This chain is 3'-5' exonuclease, found in Drosophila virilis (Fruit fly).